Reading from the N-terminus, the 1294-residue chain is MEDGKPVWAPHPTDGFQMGNIVDIGPDSLTIEPLNQKGKTFLALINQVFPAEEDSKKDVEDNCSLMYLNEATLLHNIKVRYSKDRIYTYVANILIAVNPYFDIPKIYSSEAIKSYQGKSLGTRPPHVFAIADKAFRDMKVLKMSQSIIVSGESGAGKTENTKFVLRYLTESYGTGQDIDDRIVEANPLLEAFGNAKTVRNNNSSRFGKFVEIHFNEKSSVVGGFVSHYLLEKSRICVQGKEERNYHIFYRLCAGASEDIREKLHLSSPDNFRYLNRGCTRYFANKETDKQILQNRKSPEYLKAGSMKDPLLDDHGDFIRMCTAMKKIGLDDEEKLDLFRVVAGVLHLGNIDFEEAGSTSGGCNLKNKSAQSLEYCAELLGLDQDDLRVSLTTRVMLTTAGGTKGTVIKVPLKVEQANNARDALAKTVYSHLFDHVVNRVNQCFPFETSSYFIGVLDIAGFEYFEHNSFEQFCINYCNEKLQQFFNERILKEEQELYQKEGLGVNEVHYVDNQDCIDLIEAKLVGILDILDEENRLPQPSDQHFTSAVHQKHKDHFRLTIPRKSKLAVHRNIRDDEGFIIRHFAGAVCYETTQFVEKNNDALHMSLESLICESRDKFIRELFESSTNNNKDTKQKAGKLSFISVGNKFKTQLNLLLDKLRSTGASFIRCIKPNLKMTSHHFEGAQILSQLQCSGMVSVLDLMQGGYPSRASFHELYNMYKKYMPDKLARLDPRLFCKALFKALGLNENDYKFGLTKVFFRPGKFAEFDQIMKSDPDHLAELVKRVNHWLTCSRWKKVQWCSLSVIKLKNKIKYRAEACIKMQKTIRMWLCKRRHKPRIDGLVKVGTLKKRLDKFNEVVSVLKDGKPEMNKQIKNLEISIDTLMAKIKSTMMTQEQIQKEYDALVKSSEELLSALQKKKQQEEEAERLRRIQEEMEKERKRREEDEKRRRKEEEERRMKLEMEAKRKQEEEERKKREDDEKRIQAEVEAQLARQKEEESQQQAVLEQERRDRELALRIAQSEAELISDEAQADLALRRSLDSYPVSKNDGTRPKMTPEQMAKEMSEFLSRGPAVLATKAAAGTKKYDLSKWKYAELRDTINTSCDIELLAACREEFHRRLKVYHAWKSKNKKRNTETEQRAPKSVTDYDFAPFLNNSPQQNPAAQIPARQREIEMNRQQRFFRIPFIRPADQYKDPQSKKKGWWYAHFDGPWIARQMELHPDKPPILLVAGKDDMEMCELNLEETGLTRKRGAEILPRQFEEIWERCGGIQYLQNAIESRQARPTYATAMLQSLLK.

The Myosin N-terminal SH3-like domain occupies 2–53 (EDGKPVWAPHPTDGFQMGNIVDIGPDSLTIEPLNQKGKTFLALINQVFPAEE). The 715-residue stretch at 57–771 (KDVEDNCSLM…KFAEFDQIMK (715 aa)) folds into the Myosin motor domain. 151 to 158 (GESGAGKT) contributes to the ATP binding site. Phosphoserine is present on S267. The responsible for slow ATPase activity stretch occupies residues 273 to 317 (YLNRGCTRYFANKETDKQILQNRKSPEYLKAGSMKDPLLDDHGDF). T405 is subject to Phosphothreonine. Phosphoserine is present on S604. The interval 665–672 (FIRCIKPN) is actin-binding. A required for binding calmodulin region spans residues 782–810 (KRVNHWLTCSRWKKVQWCSLSVIKLKNKI). One can recognise an IQ domain in the interval 814–834 (AEACIKMQKTIRMWLCKRRHK). The three-helix bundle stretch occupies residues 835–916 (PRIDGLVKVG…EELLSALQKK (82 aa)). The tract at residues 917–984 (KQQEEEAERL…EDDEKRIQAE (68 aa)) is SAH. The tract at residues 934 to 955 (EKERKRREEDEKRRRKEEEERR) is disordered. S1025 bears the Phosphoserine mark. The interval 1060-1285 (KEMSEFLSRG…ESRQARPTYA (226 aa)) is interaction with TAX1BP1 and CALCOCO2/NDP52. Positions 1116 to 1118 (RRL) are interaction with OPTN. S1155 carries the phosphoserine modification. Residues 1157-1285 (QQNPAAQIPA…ESRQARPTYA (129 aa)) form an interaction with TOM1 region.

Belongs to the TRAFAC class myosin-kinesin ATPase superfamily. Myosin family. Homodimer; dimerization seems to implicate the unfolding of the three-helix bundle region creating an additional calmodulin binding site, and cargo binding. Able to function as a monomer under specific conditions in vitro. Forms a complex with CFTR and DAB2 in the apical membrane of epithelial cells. Component of the DISP/DOCK7-induced septin displacement complex, at least composed of DOCK7, LRCH3 and MYO6. Binding to calmodulin through a unique insert, not found in other myosins, located in the neck region between the motor domain and the IQ domain appears to contribute to the directionality reversal. This interaction occurs only if the C-terminal lobe of calmodulin is occupied by calcium. Interaction with F-actin/ACTN1 occurs only at the apical brush border domain of the proximal tubule cells. Interacts with DAB2. In vitro, the C-terminal globular tail binds a C-terminal region of DAB2. Interacts with CFTR. Interacts with CABP5. Interacts with TOM1. Interacts with OPTN. Interacts with TAX1BP1 and CALCOCO2/NDP52. Interacts with TOM1L2. Interacts with CLIC5; may work together in a complex which also includes RDX and MYO6 to stabilize linkages between the plasma membrane and subjacent actin cytoskeleton at the base of stereocilia. In terms of processing, phosphorylation in the motor domain, induced by EGF, results in translocation of MYO6 from the cell surface to membrane ruffles and affects F-actin dynamics. Phosphorylated in vitro by p21-activated kinase (PAK). As to expression, expressed in most tissues examined including heart, brain, placenta, pancreas, spleen, thymus, prostate, testis, ovary, small intestine and colon. Highest levels in brain, pancreas, testis and small intestine. Also expressed in fetal brain and cochlea. Isoform 1 and isoform 2, containing the small insert, and isoform 4, containing neither insert, are expressed in unpolarized epithelial cells.

It localises to the golgi apparatus. It is found in the trans-Golgi network membrane. Its subcellular location is the nucleus. The protein resides in the cytoplasm. The protein localises to the perinuclear region. It localises to the membrane. It is found in the clathrin-coated pit. Its subcellular location is the cytoplasmic vesicle. The protein resides in the clathrin-coated vesicle. The protein localises to the cell projection. It localises to the filopodium. It is found in the ruffle membrane. Its subcellular location is the microvillus. The protein resides in the cytosol. The protein localises to the autophagosome. It localises to the endosome. It is found in the clathrin-coated vesicle membrane. Myosins are actin-based motor molecules with ATPase activity. Unconventional myosins serve in intracellular movements. Myosin 6 is a reverse-direction motor protein that moves towards the minus-end of actin filaments. Has slow rate of actin-activated ADP release due to weak ATP binding. Functions in a variety of intracellular processes such as vesicular membrane trafficking and cell migration. Required for the structural integrity of the Golgi apparatus via the p53-dependent pro-survival pathway. Appears to be involved in a very early step of clathrin-mediated endocytosis in polarized epithelial cells. Together with TOM1, mediates delivery of endocytic cargo to autophagosomes thereby promoting autophagosome maturation and driving fusion with lysosomes. Links TOM1 with autophagy receptors, such as TAX1BP1; CALCOCO2/NDP52 and OPTN. May act as a regulator of F-actin dynamics. As part of the DISP complex, may regulate the association of septins with actin and thereby regulate the actin cytoskeleton. May play a role in transporting DAB2 from the plasma membrane to specific cellular targets. May play a role in the extension and network organization of neurites. Required for structural integrity of inner ear hair cells. Required for the correct localization of CLIC5 and RDX at the stereocilium base. Modulates RNA polymerase II-dependent transcription. This Homo sapiens (Human) protein is Unconventional myosin-VI.